Here is a 194-residue protein sequence, read N- to C-terminus: Ribosomal RNA small subunit methyltransferase G (194 aa).

S-adenosyl-L-methionine is bound by residues G70, Y75, 121-122 (VE), and R135.

Belongs to the methyltransferase superfamily. RNA methyltransferase RsmG family.

The protein localises to the cytoplasm. The enzyme catalyses guanosine(527) in 16S rRNA + S-adenosyl-L-methionine = N(7)-methylguanosine(527) in 16S rRNA + S-adenosyl-L-homocysteine. Functionally, specifically methylates the N7 position of guanine in position 527 of 16S rRNA. This is Ribosomal RNA small subunit methyltransferase G from Aliarcobacter butzleri (strain RM4018) (Arcobacter butzleri).